A 423-amino-acid chain; its full sequence is 3-phosphoshikimate 1-carboxyvinyltransferase (423 aa).

Positions 21, 22, and 26 each coordinate 3-phosphoshikimate. Lysine 21 lines the phosphoenolpyruvate pocket. 2 residues coordinate phosphoenolpyruvate: glycine 92 and arginine 120. 3-phosphoshikimate contacts are provided by serine 166, glutamine 168, serine 194, aspartate 310, and lysine 337. Position 168 (glutamine 168) interacts with phosphoenolpyruvate. Aspartate 310 functions as the Proton acceptor in the catalytic mechanism. Phosphoenolpyruvate contacts are provided by arginine 341, arginine 384, and lysine 409.

The protein belongs to the EPSP synthase family. In terms of assembly, monomer.

The protein localises to the cytoplasm. The enzyme catalyses 3-phosphoshikimate + phosphoenolpyruvate = 5-O-(1-carboxyvinyl)-3-phosphoshikimate + phosphate. The protein operates within metabolic intermediate biosynthesis; chorismate biosynthesis; chorismate from D-erythrose 4-phosphate and phosphoenolpyruvate: step 6/7. Its function is as follows. Catalyzes the transfer of the enolpyruvyl moiety of phosphoenolpyruvate (PEP) to the 5-hydroxyl of shikimate-3-phosphate (S3P) to produce enolpyruvyl shikimate-3-phosphate and inorganic phosphate. This chain is 3-phosphoshikimate 1-carboxyvinyltransferase, found in Syntrophobacter fumaroxidans (strain DSM 10017 / MPOB).